The following is a 462-amino-acid chain: Probable protein phosphatase 2C 1 (462 aa).

One can recognise a PPM-type phosphatase domain in the interval 60 to 362 (SSCIFTQQGR…DDCAVVCLFL (303 aa)). D95, G96, D307, and D353 together coordinate Mn(2+). Disordered stretches follow at residues 369 to 394 (ETSD…QGAE) and 421 to 443 (EADN…LEGV). The span at 376 to 385 (QCFSSATNAV) shows a compositional bias: polar residues. Residues 424 to 434 (NAEKEKTREGE) are compositionally biased toward basic and acidic residues.

The protein belongs to the PP2C family. Interacts with GCN5. Requires Mg(2+) as cofactor. Mn(2+) serves as cofactor.

The enzyme catalyses O-phospho-L-seryl-[protein] + H2O = L-seryl-[protein] + phosphate. The catalysed reaction is O-phospho-L-threonyl-[protein] + H2O = L-threonyl-[protein] + phosphate. Its function is as follows. May act as negative regulator of GCN5. The protein is Probable protein phosphatase 2C 1 (PPC6-6) of Arabidopsis thaliana (Mouse-ear cress).